The following is a 778-amino-acid chain: MSKTPRTQPGRLSSRFWRLLGASTDKNLNYSSAEVTAAAAYHKEAADLGDEQLRKACGLLNLNDLADSRDVPQFLAIVREASERSTGLRPFDVQLLGALRMLAGDVIEMATGEGKTLAGAIAAAGYALAGRHVHVVTINDYLARRDAEWMGPLLEAIGLTVGWITAESTREDRKAAYGCDVTYASVNEIGFDVLRDQLVTDVDDLVSPHPDVALIDEADSVLVDEALVPLVLAGATHRETPRLEIIKLVGELSAESDYDTDSDSRNVHLTDVGARKVEKALGGIDLYSEEHVGTTLTEVNVALHAHVLLQRDVHYIVRDDAVHLVNASRGRIAQLQRWPDGLQAAVEAKEGIETTETGEVLDTITVQALINRYATVCGMTGTALAAGEQLRQFYKLGVSPIPPNTPNIRDDASDRVYITAAAKNDAIVAHLAEVHETGQPVLVGTRNVAESEELHERLLRHGVPAVVLNAKNDAEEARFIAEAGKFGAVTVSTQMAGRGTDIRLGGSDESDHDRVVELGGLHVVGTGRHHTERLDNQLRGRAGRQGDPGSSVFFSSWEDDVIAANLDRNKLPMQTDEDGRIISLKTTGLLDHAQRVAEGRLLDVHANTWRYNQLIAQQRAIIVDRRNALLSSATAREELAELAPKRYEELAQALPKEEAEERLETICRLIMLYHLDRGWADHLAYLADIRESIHLRALGRQSPLDEFHRLAVNAFALLAADAIEAAQQTFETANILDGAPGLDLSKLARPTSTWTYMVNDAPLSDDTLSPLSLPGVFR.

ATP-binding positions include glutamine 94, glycine 112 to threonine 116, and aspartate 501.

This sequence belongs to the SecA family. Monomer and homodimer. Part of the essential Sec protein translocation apparatus which comprises SecA, SecYEG and auxiliary proteins SecDF. Other proteins may also be involved.

Its subcellular location is the cell membrane. The protein resides in the cytoplasm. It catalyses the reaction ATP + H2O + cellular proteinSide 1 = ADP + phosphate + cellular proteinSide 2.. Functionally, part of the Sec protein translocase complex. Interacts with the SecYEG preprotein conducting channel. Has a central role in coupling the hydrolysis of ATP to the transfer of proteins into and across the cell membrane, serving as an ATP-driven molecular motor driving the stepwise translocation of polypeptide chains across the membrane. The protein is Protein translocase subunit SecA 2 of Mycobacterium leprae (strain TN).